Here is a 180-residue protein sequence, read N- to C-terminus: Geminin homolog (180 aa).

Residues 1–27 are compositionally biased toward polar residues; the sequence is MSRIGLQQLNNSARNSPFGSEKATGTK. A disordered region spans residues 1–29; the sequence is MSRIGLQQLNNSARNSPFGSEKATGTKQI.

Belongs to the geminin family. As to quaternary structure, homodimer. Interacts with cdt-1; the interaction most likely inhibits the ability of cdt-1 to load the mini-chromosome maintenance (MCM) complex onto DNA and therefore reduces DNA replication licensing activity. Interacts with nob-1 and ceh-32.

The protein localises to the cytoplasm. The protein resides in the nucleus. In terms of biological role, inhibits DNA replication by binding to the DNA replication licensing factor cdt-1. Its interaction with cdt-1 prevents the cdt-1 loading of the mini-chromosome maintenance (MCM) complex onto DNA and therefore DNA replication licencing. The sequence is that of Geminin homolog from Caenorhabditis elegans.